The primary structure comprises 252 residues: Neurexophilin-3 (252 aa).

Residues 1–22 (MQLTRCCFVFLVQGSLYLVICG) form the signal peptide. The interval 23–75 (QDDGPPGSEDPERDDHEGQPRPRVPRKRGHISPKSRPMANSTLLGLLAPPGEA) is II. A disordered region spans residues 27–58 (PPGSEDPERDDHEGQPRPRVPRKRGHISPKSR). Residues 45–55 (RVPRKRGHISP) show a composition bias toward basic residues. N-linked (GlcNAc...) asparagine glycans are attached at residues asparagine 62, asparagine 127, asparagine 137, and asparagine 143. The segment at 76–157 (WGILGQPPNR…LVPPSKAVEF (82 aa)) is III. The IV (linker domain) stretch occupies residues 158-166 (HQEQQIFIE). The tract at residues 167–252 (AKASKIFNCR…HSDTPYYPSG (86 aa)) is v (Cys-rich).

This sequence belongs to the neurexophilin family. May be proteolytically processed at the boundary between the N-terminal non-conserved and the central conserved domain in neuron-like cells. In terms of tissue distribution, highest level in brain.

The protein resides in the secreted. Its function is as follows. May be signaling molecules that resemble neuropeptides. Ligand for alpha-neurexins. The protein is Neurexophilin-3 (NXPH3) of Homo sapiens (Human).